Here is a 43-residue protein sequence, read N- to C-terminus: Potassium channel toxin gamma-KTx 4.5 (43 aa).

4 cysteine pairs are disulfide-bonded: Cys-5-Cys-23, Cys-11-Cys-34, Cys-20-Cys-39, and Cys-24-Cys-41.

The protein belongs to the ergtoxin family. Gamma-KTx 4 subfamily. In terms of tissue distribution, expressed by the venom gland.

It is found in the secreted. Reversibly blocks Kv11/ERG potassium channels. The sequence is that of Potassium channel toxin gamma-KTx 4.5 from Centruroides exilicauda (Bark scorpion).